The primary structure comprises 302 residues: Phosphate butyryltransferase (302 aa).

The protein belongs to the phosphate acetyltransferase and butyryltransferase family.

It catalyses the reaction butanoyl-CoA + phosphate = butanoyl phosphate + CoA. Its pathway is lipid metabolism; butanoate metabolism. Its function is as follows. Catalyzes the conversion of butyryl-CoA through butyryl phosphate to butyrate. The sequence is that of Phosphate butyryltransferase (ptb) from Clostridium beijerinckii (strain ATCC 51743 / NCIMB 8052) (Clostridium acetobutylicum).